Consider the following 262-residue polypeptide: ATP synthase subunit a (262 aa).

The next 5 helical transmembrane spans lie at 24 to 44 (AVHL…LFVF), 84 to 104 (VIAP…AIDL), 129 to 149 (DISA…FYTV), 194 to 214 (LFGN…MYMA), and 228 to 248 (LVWA…FMML).

It belongs to the ATPase A chain family. F-type ATPases have 2 components, CF(1) - the catalytic core - and CF(0) - the membrane proton channel. CF(1) has five subunits: alpha(3), beta(3), gamma(1), delta(1), epsilon(1). CF(0) has three main subunits: a(1), b(2) and c(9-12). The alpha and beta chains form an alternating ring which encloses part of the gamma chain. CF(1) is attached to CF(0) by a central stalk formed by the gamma and epsilon chains, while a peripheral stalk is formed by the delta and b chains.

It is found in the cell inner membrane. Its function is as follows. Key component of the proton channel; it plays a direct role in the translocation of protons across the membrane. In Actinobacillus pleuropneumoniae serotype 3 (strain JL03), this protein is ATP synthase subunit a.